A 320-amino-acid polypeptide reads, in one-letter code: Ferrochelatase (320 aa).

Fe cation contacts are provided by histidine 194 and glutamate 275.

The protein belongs to the ferrochelatase family. Monomer.

The protein resides in the cytoplasm. It carries out the reaction heme b + 2 H(+) = protoporphyrin IX + Fe(2+). Its pathway is porphyrin-containing compound metabolism; protoheme biosynthesis; protoheme from protoporphyrin-IX: step 1/1. Functionally, catalyzes the ferrous insertion into protoporphyrin IX. In Escherichia coli O45:K1 (strain S88 / ExPEC), this protein is Ferrochelatase.